The chain runs to 165 residues: NADH-quinone oxidoreductase subunit I (165 aa).

2 4Fe-4S ferredoxin-type domains span residues 57–86 (RRYE…IESE) and 96–125 (TRYD…ETHI). [4Fe-4S] cluster is bound by residues cysteine 66, cysteine 69, cysteine 72, cysteine 76, cysteine 105, cysteine 108, cysteine 111, and cysteine 115.

The protein belongs to the complex I 23 kDa subunit family. NDH-1 is composed of 14 different subunits. Subunits NuoA, H, J, K, L, M, N constitute the membrane sector of the complex. [4Fe-4S] cluster serves as cofactor.

The protein localises to the cell inner membrane. It carries out the reaction a quinone + NADH + 5 H(+)(in) = a quinol + NAD(+) + 4 H(+)(out). NDH-1 shuttles electrons from NADH, via FMN and iron-sulfur (Fe-S) centers, to quinones in the respiratory chain. The immediate electron acceptor for the enzyme in this species is believed to be ubiquinone. Couples the redox reaction to proton translocation (for every two electrons transferred, four hydrogen ions are translocated across the cytoplasmic membrane), and thus conserves the redox energy in a proton gradient. The chain is NADH-quinone oxidoreductase subunit I from Methylibium petroleiphilum (strain ATCC BAA-1232 / LMG 22953 / PM1).